The chain runs to 240 residues: Proteasome subunit alpha (240 aa).

It belongs to the peptidase T1A family. In terms of assembly, the 20S proteasome core is composed of 14 alpha and 14 beta subunits that assemble into four stacked heptameric rings, resulting in a barrel-shaped structure. The two inner rings, each composed of seven catalytic beta subunits, are sandwiched by two outer rings, each composed of seven alpha subunits. The catalytic chamber with the active sites is on the inside of the barrel. Has a gated structure, the ends of the cylinder being occluded by the N-termini of the alpha-subunits. Is capped at one or both ends by the proteasome regulatory ATPase, PAN.

It is found in the cytoplasm. With respect to regulation, the formation of the proteasomal ATPase PAN-20S proteasome complex, via the docking of the C-termini of PAN into the intersubunit pockets in the alpha-rings, triggers opening of the gate for substrate entry. Interconversion between the open-gate and close-gate conformations leads to a dynamic regulation of the 20S proteasome proteolysis activity. Functionally, component of the proteasome core, a large protease complex with broad specificity involved in protein degradation. This chain is Proteasome subunit alpha, found in Methanoregula boonei (strain DSM 21154 / JCM 14090 / 6A8).